The following is a 200-amino-acid chain: uncharacterized protein (200 aa).

The chain crosses the membrane as a helical span at residues 7-29 (FFFLFSFISHAMMLTGLIGSSSF).

It localises to the membrane. This is an uncharacterized protein from Saccharomyces cerevisiae (strain ATCC 204508 / S288c) (Baker's yeast).